A 378-amino-acid polypeptide reads, in one-letter code: 5-amino-6-(D-ribitylamino)uracil--L-tyrosine 4-hydroxyphenyl transferase (378 aa).

In terms of domain architecture, Radical SAM core spans 59 to 306 (VTYVINRNIN…TAVARIYLGN (248 aa)). Positions 73, 77, and 80 each coordinate [4Fe-4S] cluster.

Belongs to the radical SAM superfamily. CofH family. As to quaternary structure, consists of two subunits, CofG and CofH. Requires [4Fe-4S] cluster as cofactor.

The enzyme catalyses 5-amino-6-(D-ribitylamino)uracil + L-tyrosine + S-adenosyl-L-methionine = 5-amino-5-(4-hydroxybenzyl)-6-(D-ribitylimino)-5,6-dihydrouracil + 2-iminoacetate + 5'-deoxyadenosine + L-methionine + H(+). The protein operates within cofactor biosynthesis; coenzyme F0 biosynthesis. Its function is as follows. Catalyzes the radical-mediated synthesis of 5-amino-5-(4-hydroxybenzyl)-6-(D-ribitylimino)-5,6-dihydrouracil from 5-amino-6-(D-ribitylamino)uracil and L-tyrosine. This Microcystis aeruginosa (strain NIES-843 / IAM M-2473) protein is 5-amino-6-(D-ribitylamino)uracil--L-tyrosine 4-hydroxyphenyl transferase.